The chain runs to 242 residues: Histone-lysine N-methyltransferase set-1 (242 aa).

A disordered region spans residues 1–61 (MKVAAKKLAT…TRSRKGVSVK (61 aa)). The segment covering 30–43 (SENPSSLASHSSSS) has biased composition (low complexity). One can recognise an SET domain in the interval 104–226 (RLLEVYKDVV…QGEELLYDYG (123 aa)). S-adenosyl-L-methionine is bound by residues 114–116 (KGR), Tyr-159, and 186–187 (NH).

The protein belongs to the class V-like SAM-binding methyltransferase superfamily. Histone-lysine methyltransferase family. PR/SET subfamily. In embryos, it is expressed ubiquitously. In late embryos, it is expressed in hypodermal seam cells. In L3 and L4 larvae and thereafter, it is expressed in vulval precursor cells. In adult males, it is also expressed in 6 unidentified posterior cells.

It is found in the nucleus. The protein localises to the chromosome. The catalysed reaction is L-lysyl(20)-[histone H4] + S-adenosyl-L-methionine = N(6)-methyl-L-lysyl(20)-[histone H4] + S-adenosyl-L-homocysteine + H(+). Its function is as follows. Histone methyltransferase that specifically monomethylates 'Lys-20' of histone H4 (H4K20me1). H4K20me1 is enriched on hermaphrodite X chromosomes and during mitosis. Involved in dosage compensation by repression of X-linked gene expression in hermaphrodites. Plays a role in growth and body fat regulation downstream of the TOR complex 2 pathway. The polypeptide is Histone-lysine N-methyltransferase set-1 (set-1) (Caenorhabditis elegans).